The sequence spans 256 residues: 5'-nucleotidase SurE (256 aa).

The a divalent metal cation site is built by Asp8, Asp9, Ser42, and Asn94.

This sequence belongs to the SurE nucleotidase family. A divalent metal cation serves as cofactor.

The protein resides in the cytoplasm. It carries out the reaction a ribonucleoside 5'-phosphate + H2O = a ribonucleoside + phosphate. Nucleotidase that shows phosphatase activity on nucleoside 5'-monophosphates. The sequence is that of 5'-nucleotidase SurE from Ehrlichia chaffeensis (strain ATCC CRL-10679 / Arkansas).